The chain runs to 346 residues: Probable alpha-1,2-galactosyltransferase gmh2 (346 aa).

Residues 1-11 (MALMLSRIPRR) lie on the Cytoplasmic side of the membrane. A helical; Signal-anchor for type II membrane protein membrane pass occupies residues 12–32 (FFFLFLTVGLIAGAFLYSLIY). Residues 33 to 346 (FVDVDLVSKV…LWQKFYALID (314 aa)) lie on the Lumenal side of the membrane. Residues Asn64, Asn142, and Asn224 are each glycosylated (N-linked (GlcNAc...) asparagine).

It belongs to the glycosyltransferase 34 family.

It localises to the golgi apparatus membrane. The chain is Probable alpha-1,2-galactosyltransferase gmh2 (gmh2) from Schizosaccharomyces pombe (strain 972 / ATCC 24843) (Fission yeast).